Consider the following 708-residue polypeptide: Protein SUPPRESSOR OF MAX2 1A (708 aa).

The interval 248–283 (QMASKPQEKAASPPGSPVRTDLVLGPKQTETTPEKT) is disordered. The EAR motif lies at 537-541 (FDLNE).

Belongs to the ClpA/ClpB family.

Probable component of a transcriptional corepressor complex that acts downstream of MAX2 to negatively regulate karrikins/strigolactone responses. Involved in the (-)-germacrene D signaling pathway influencing plant fitness and occurring in the stigma in a KAI2IA-dependent manner. The polypeptide is Protein SUPPRESSOR OF MAX2 1A (Petunia hybrida (Petunia)).